A 682-amino-acid chain; its full sequence is Potassium-transporting ATPase ATP-binding subunit (682 aa).

4 consecutive transmembrane segments (helical) span residues 34 to 54 (PVMF…VAMA), 62 to 82 (AGFT…ANVA), 219 to 239 (IALT…TATL), and 254 to 274 (VLVA…LSAI). Residue Asp307 is the 4-aspartylphosphate intermediate of the active site. ATP is bound by residues Asp344, Glu348, 377-384 (FTAQTRMS), and Lys395. 2 residues coordinate Mg(2+): Asp518 and Asp522. Helical transmembrane passes span 588 to 608 (FAII…LNVM), 616 to 636 (AILS…PLAL), and 662 to 682 (LVVP…FGLV).

The protein belongs to the cation transport ATPase (P-type) (TC 3.A.3) family. Type IA subfamily. As to quaternary structure, the system is composed of three essential subunits: KdpA, KdpB and KdpC.

It is found in the cell inner membrane. The catalysed reaction is K(+)(out) + ATP + H2O = K(+)(in) + ADP + phosphate + H(+). Functionally, part of the high-affinity ATP-driven potassium transport (or Kdp) system, which catalyzes the hydrolysis of ATP coupled with the electrogenic transport of potassium into the cytoplasm. This subunit is responsible for energy coupling to the transport system and for the release of the potassium ions to the cytoplasm. The sequence is that of Potassium-transporting ATPase ATP-binding subunit from Enterobacter sp. (strain 638).